The sequence spans 496 residues: Isocitrate dehydrogenase [NADP] (496 aa).

Leu88 and Thr90 together coordinate NADP(+). The D-threo-isocitrate site is built by Ser98, Asn100, Arg104, Arg114, and Arg137. Residues Asn193, Gln229, and Lys232 each coordinate NADP(+). A Mg(2+)-binding site is contributed by Asp248. NADP(+) is bound by residues Glu277, Gly281, Ser282, Ala283, Lys285, Tyr286, and Asn293.

This sequence belongs to the isocitrate and isopropylmalate dehydrogenases family. As to quaternary structure, homodimer. It depends on Mg(2+) as a cofactor. Mn(2+) is required as a cofactor.

It catalyses the reaction D-threo-isocitrate + NADP(+) = 2-oxoglutarate + CO2 + NADPH. Functionally, catalyzes the oxidative decarboxylation of isocitrate to 2-oxoglutarate and carbon dioxide with the concomitant reduction of NADP(+). The protein is Isocitrate dehydrogenase [NADP] (icd) of Thermus thermophilus (strain ATCC 27634 / DSM 579 / HB8).